The following is a 564-amino-acid chain: Pyranose 2-oxidase (564 aa).

Residues M1–Q25 constitute a propeptide that is removed on maturation. H158 bears the Tele-8alpha-FAD histidine mark. Substrate contacts are provided by Q392 and H394. H498 acts as the Proton acceptor in catalysis. N541 is an active-site residue.

The protein belongs to the GMC oxidoreductase family. As to quaternary structure, homotetramer. FAD is required as a cofactor.

It carries out the reaction D-glucose + O2 = 2-dehydro-D-glucose + H2O2. Its function is as follows. Catalyzes the oxidation of various aldopyranoses and disaccharides on carbon-2 to the corresponding 2-keto sugars concomitant with the reduction of O(2) to H(2)O(2). The preferred substrate is D-glucose which is converted to 2-dehydro-D-glucose. Acts also on D-xylose, L-sorbose, D-galactose and 1,5-anhydroglucitol, a diagnostic marker of diabetes mellitus. The sequence is that of Pyranose 2-oxidase (p2ox) from Tricholoma matsutake (Matsutake mushroom).